The primary structure comprises 833 residues: RNA-binding protein 5-A (833 aa).

The interval 1–87 (MGSDKRVSRS…GYHSDGDYMD (87 aa)) is disordered. One can recognise an RRM 1 domain in the interval 102-182 (KTIMLRGLPI…KTIAMHYSNP (81 aa)). The segment at 185-214 (KFEDWLCNKCGLYNFRRRLKCFRCGAAKAE) adopts a RanBP2-type zinc-finger fold. One can recognise an RRM 2 domain in the interval 241-325 (SAIILRNIGP…KTIGVDFAKS (85 aa)). Residues 396–428 (TGAAEQGTAPQAESSSPVPATTSAVVCQSPQMY) show a composition bias toward polar residues. Disordered stretches follow at residues 396–458 (TGAA…EEAA) and 523–559 (AADGAGQSGTQPNGANPGTSKEGKEKKEKPKSKTAQQ). A compositionally biased stretch (low complexity) spans 429–458 (QQPGSPTQSSTSTVAASATPASGTSAEEAA). A C2H2-type zinc finger spans residues 667 to 692 (LACLLCRRQFPNKDALTRHQQLSDLH). In terms of domain architecture, G-patch spans 761–807 (NSNIGNKMLQAMGWKEGSGLGRKSQGITAPIQAQVRMRGAGLGAKGS).

This sequence belongs to the RBM5/RBM10 family. Component of the spliceosome A complex (also known as the prespliceosome). Appears to dissociate from the spliceosome upon formation of the spliceosome B complex (also known as the precatalytic spliceosome), in which the heterotrimeric U4/U6.U5 snRNPs are bound.

It is found in the nucleus. Functionally, component of the spliceosome A complex. Regulates alternative splicing of a number of mRNAs. May modulate splice site pairing after recruitment of the U1 and U2 snRNPs to the 5' and 3' splice sites of the intron. The polypeptide is RNA-binding protein 5-A (rbm5-a) (Xenopus laevis (African clawed frog)).